We begin with the raw amino-acid sequence, 338 residues long: Solute carrier family 35 member G3 (338 aa).

The disordered stretch occupies residues 1–24 (MAGSHPYFNQPDSTHPSPPSAPPS). A run of 9 helical transmembrane segments spans residues 37–57 (TSGLLVALLGGGLPAGFVGPL), 67–87 (LPSLELLIWRCLFHLPIALLL), 105–125 (FFCALLNILSIGCAYSAVQVV), 160–180 (CGLLGCILGLIIIVGPGLWTL), 190–210 (ALGYAEAFLGGRALSLGLLVY), 221–241 (TVAFLSGLVGLLGSVPGLFVL), 250–270 (LLSWSCVGAVGILALVSFTCV), 281–301 (LVCAVLHSEVVVALILQYYML), and 305–325 (VAPSDIMGAGVALGSIAIITA). The EamA 1 domain maps to 49 to 174 (LPAGFVGPLS…CILGLIIIVG (126 aa)). The EamA 2 domain maps to 272–325 (YAVTKAHPALVCAVLHSEVVVALILQYYMLHETVAPSDIMGAGVALGSIAIITA).

It belongs to the SLC35G solute transporter family.

Its subcellular location is the membrane. In Pan paniscus (Pygmy chimpanzee), this protein is Solute carrier family 35 member G3 (SLC35G3).